A 287-amino-acid chain; its full sequence is Universal stress protein Slr1230 (287 aa).

It belongs to the universal stress protein A family.

The polypeptide is Universal stress protein Slr1230 (Synechocystis sp. (strain ATCC 27184 / PCC 6803 / Kazusa)).